We begin with the raw amino-acid sequence, 317 residues long: Melanocyte-stimulating hormone receptor (317 aa).

Residues 1–37 lie on the Extracellular side of the membrane; that stretch reads MPALGSQRRLLGSLNCTPPATLPFTLAPNRTGPQCLE. N29 carries an N-linked (GlcNAc...) asparagine glycan. The chain crosses the membrane as a helical span at residues 38–63; it reads VSIPDGLFLSLGLVSLVENVLVVAAI. Topologically, residues 64 to 72 are cytoplasmic; the sequence is AKNRNLHSP. The helical transmembrane segment at 73–93 threads the bilayer; it reads MYYFICCLAVSDLLVSVSNVL. Topologically, residues 94–118 are extracellular; it reads ETAVMLLLEAGVLATQAAVVQQLDN. A helical transmembrane segment spans residues 119–140; sequence VIDVLICGSMVSSLCFLGAIAV. Over 141 to 163 the chain is Cytoplasmic; that stretch reads DRYISIFYALRYHSVVTLPRAWR. A helical membrane pass occupies residues 164–183; that stretch reads IIAAIWVASILTSLLFITYY. Over 184–191 the chain is Extracellular; it reads NHKVILLC. Residues 192-211 form a helical membrane-spanning segment; sequence LVGLFIAMLALMAVLYVHML. The Cytoplasmic portion of the chain corresponds to 212–240; the sequence is ARACQHARGIARLQKRQRPIHQGFGLKGA. A helical transmembrane segment spans residues 241–266; that stretch reads ATLTILLGVFFLCWGPFFLHLSLIVL. Over 267-279 the chain is Extracellular; that stretch reads CPQHPTCGCIFKN. Residues 280–300 form a helical membrane-spanning segment; sequence FNLFLALIICNAIVDPLIYAF. Residues 301 to 317 lie on the Cytoplasmic side of the membrane; that stretch reads RSQELRKTLQEVLQCSW. A lipid anchor (S-palmitoyl cysteine) is attached at C315.

Belongs to the G-protein coupled receptor 1 family. As to quaternary structure, interacts with MGRN1, but does not undergo MGRN1-mediated ubiquitination; this interaction competes with GNAS-binding and thus inhibits agonist-induced cAMP production. Interacts with OPN3; the interaction results in a decrease in MC1R-mediated cAMP signaling and ultimately a decrease in melanin production in melanocytes. As to expression, highly expressed in the testis.

It is found in the cell membrane. Its function is as follows. Receptor for MSH (alpha, beta) and ACTH. Does not seem to be active with gamma-MSH. The activity of this receptor is mediated by G proteins which activate adenylate cyclase. Mediates melanogenesis, the production of eumelanin (black/brown) and phaeomelanin (red/yellow), via regulation of cAMP signaling in melanocytes. The chain is Melanocyte-stimulating hormone receptor (MC1R) from Bos taurus (Bovine).